The chain runs to 87 residues: Small ribosomal subunit protein bS20 (87 aa).

Residues 1–22 (MANSAQARKRARQAVKQRAHNA) form a disordered region. The segment covering 7–19 (ARKRARQAVKQRA) has biased composition (basic residues).

This sequence belongs to the bacterial ribosomal protein bS20 family.

Its function is as follows. Binds directly to 16S ribosomal RNA. In Methylobacillus flagellatus (strain ATCC 51484 / DSM 6875 / VKM B-1610 / KT), this protein is Small ribosomal subunit protein bS20.